The primary structure comprises 440 residues: RNA polymerase II C-terminal domain phosphatase-like 4 (440 aa).

Residues 1–36 (MSVASDSPVHSSSSSDDLAAFLDAELDSASDASSGP) show a composition bias toward low complexity. The interval 1–49 (MSVASDSPVHSSSSSDDLAAFLDAELDSASDASSGPSEEEEAEDDVESG) is disordered. A compositionally biased stretch (acidic residues) spans 37–47 (SEEEEAEDDVE). The region spanning 118-292 (QRQRKLYLVL…DHRYKSLSEL (175 aa)) is the FCP1 homology domain. Residues 337 to 429 (VRKEILKGCK…MKQPEENFGL (93 aa)) form the BRCT domain.

In terms of assembly, interacts with RAP74. It depends on Mg(2+) as a cofactor. Co(2+) serves as cofactor. The cofactor is Mn(2+).

The protein resides in the nucleus. The enzyme catalyses O-phospho-L-seryl-[protein] + H2O = L-seryl-[protein] + phosphate. It carries out the reaction O-phospho-L-threonyl-[protein] + H2O = L-threonyl-[protein] + phosphate. Its function is as follows. Processively dephosphorylates 'Ser-2' and/or 'Ser-5' of the heptad repeats YSPTSPS in the C-terminal domain of the largest RNA polymerase II subunit (RPB1). This promotes the activity of RNA polymerase II. Required for normal plant growth. This is RNA polymerase II C-terminal domain phosphatase-like 4 (CPL4) from Arabidopsis thaliana (Mouse-ear cress).